The chain runs to 255 residues: Complement C1q-like protein 3 (255 aa).

The N-terminal stretch at 1–20 (MVLLLVILIPVLVSSAGTSA) is a signal peptide. The segment at 39–109 (KAPSTAATPD…GLPGPPGAPG (71 aa)) is disordered. Residues 61–111 (GPKGEAGRPGKAGPRGPPGEPGPPGPVGPPGEKGEPGRQGLPGPPGAPGLN) enclose the Collagen-like domain. Over residues 75 to 89 (RGPPGEPGPPGPVGP) the composition is skewed to pro residues. Residues 122–255 (STVPKIAFYA…TFSGFIIYAD (134 aa)) form the C1q domain.

As to quaternary structure, forms homooligomers. Interacts with ADGRB3. Forms heterooligomers with C1QL2 and C1QL4, when proteins are coexpressed; this interaction does not occur after secretion. As to expression, highly expressed in brain and white adipose tissue. In gonadal fat pad, expressed at lower levels in adipocytes than in the stromal vascular fraction (VSP), which contains preadipocytes, fibroblasts, endothelial cells and occasional immune cells. Expression exhibits sexually dimorphism, with higher levels in females than in males (at protein level). Tends to be up-regulated in adipose tissue from obese males, but not females. Expressed in glial cells.

It localises to the secreted. Its function is as follows. May regulate the number of excitatory synapses that are formed on hippocampus neurons. Has no effect on inhibitory synapses. Plays a role in glucose homeostasis. Via AMPK signaling pathway, stimulates glucose uptake in adipocytes, myotubes and hepatocytes and enhances insulin-stimulated glucose uptake. In a hepatoma cell line, reduces the expression of gluconeogenic enzymes G6PC1 and PCK1 and hence decreases de novo glucose production. This is Complement C1q-like protein 3 (C1ql3) from Mus musculus (Mouse).